Reading from the N-terminus, the 574-residue chain is Putative dehydratase IlvD1 (574 aa).

Cys124 and Cys197 together coordinate [4Fe-4S] cluster.

Belongs to the IlvD/Edd family. [4Fe-4S] cluster is required as a cofactor.

In terms of biological role, involved in the degradation of galactose via the DeLey-Doudoroff pathway. The polypeptide is Putative dehydratase IlvD1 (ilvD1) (Rhizobium meliloti (strain 1021) (Ensifer meliloti)).